Here is a 367-residue protein sequence, read N- to C-terminus: Ferrochelatase (367 aa).

Fe cation contacts are provided by H226 and E307.

It belongs to the ferrochelatase family.

The protein localises to the cytoplasm. It catalyses the reaction heme b + 2 H(+) = protoporphyrin IX + Fe(2+). The protein operates within porphyrin-containing compound metabolism; protoheme biosynthesis; protoheme from protoporphyrin-IX: step 1/1. Catalyzes the ferrous insertion into protoporphyrin IX. This is Ferrochelatase from Burkholderia mallei (strain NCTC 10247).